The sequence spans 346 residues: Putative cytochrome bd menaquinol oxidase subunit II (346 aa).

The next 9 membrane-spanning stretches (helical) occupy residues 7–27, 63–83, 87–107, 119–139, 164–184, 201–221, 236–256, 269–289, and 312–332; these read ALIA…MATM, VFIV…TFVL, LLIP…FLVF, YISG…LPVT, AYSF…LLLA, KSAL…MVTM, FSWI…LFLP, LALV…GRAH, and ALFA…FFFW.

The protein belongs to the cytochrome ubiquinol oxidase subunit 2 family.

The protein resides in the cell membrane. Functionally, may have a role in sporulation. Can compensate for the loss of cytochrome aa3. The protein is Putative cytochrome bd menaquinol oxidase subunit II (ythB) of Bacillus subtilis (strain 168).